The chain runs to 138 residues: Ergosterol biosynthetic protein 28 (138 aa).

A helical membrane pass occupies residues 17–33 (LPYWLLFISVVSIFNSV). Residue Asn-40 is glycosylated (N-linked (GlcNAc...) asparagine). The next 3 membrane-spanning stretches (helical) occupy residues 56–75 (LSAR…RFYG), 87–107 (LTQF…LYFG), and 114–131 (GLSG…WMYL).

The protein belongs to the ERG28 family. Heterotetramer of ERG25, ERG26, ERG27 and ERG28. ERG28 acts as a scaffold to tether ERG27 and other 4,4-demethylation-related enzymes, forming a demethylation enzyme complex, in the endoplasmic reticulum. Interacts with ERG25, ERG26 and ERG27. Also interacts with ERG1, ERG3, ERG5, ERG6 and ERG11.

It is found in the endoplasmic reticulum membrane. Part of the third module of ergosterol biosynthesis pathway that includes the late steps of the pathway. ERG28 has a role as a scaffold to help anchor the catalytic components of the C-4 demethylation complex ERG25, ERG26 and ERG27 to the endoplasmic reticulum. The third module or late pathway involves the ergosterol synthesis itself through consecutive reactions that mainly occur in the endoplasmic reticulum (ER) membrane. Firstly, the squalene synthase ERG9 catalyzes the condensation of 2 farnesyl pyrophosphate moieties to form squalene, which is the precursor of all steroids. Squalene synthase is crucial for balancing the incorporation of farnesyl diphosphate (FPP) into sterol and nonsterol isoprene synthesis. Secondly, the squalene epoxidase ERG1 catalyzes the stereospecific oxidation of squalene to (S)-2,3-epoxysqualene, which is considered to be a rate-limiting enzyme in steroid biosynthesis. Then, the lanosterol synthase ERG7 catalyzes the cyclization of (S)-2,3 oxidosqualene to lanosterol, a reaction that forms the sterol core. In the next steps, lanosterol is transformed to zymosterol through a complex process involving various demethylation, reduction and desaturation reactions. The lanosterol 14-alpha-demethylase ERG11 (also known as CYP51) catalyzes C14-demethylation of lanosterol to produce 4,4'-dimethyl cholesta-8,14,24-triene-3-beta-ol, which is critical for ergosterol biosynthesis. The C-14 reductase ERG24 reduces the C14=C15 double bond of 4,4-dimethyl-cholesta-8,14,24-trienol to produce 4,4-dimethyl-cholesta-8,24-dienol. 4,4-dimethyl-cholesta-8,24-dienol is substrate of the C-4 demethylation complex ERG25-ERG26-ERG27 in which ERG25 catalyzes the three-step monooxygenation required for the demethylation of 4,4-dimethyl and 4alpha-methylsterols, ERG26 catalyzes the oxidative decarboxylation that results in a reduction of the 3-beta-hydroxy group at the C-3 carbon to an oxo group, and ERG27 is responsible for the reduction of the keto group on the C-3. ERG28 has a role as a scaffold to help anchor ERG25, ERG26 and ERG27 to the endoplasmic reticulum and ERG29 regulates the activity of the iron-containing C4-methylsterol oxidase ERG25. Then, the sterol 24-C-methyltransferase ERG6 catalyzes the methyl transfer from S-adenosyl-methionine to the C-24 of zymosterol to form fecosterol. The C-8 sterol isomerase ERG2 catalyzes the reaction which results in unsaturation at C-7 in the B ring of sterols and thus converts fecosterol to episterol. The sterol-C5-desaturase ERG3 then catalyzes the introduction of a C-5 double bond in the B ring to produce 5-dehydroepisterol. The C-22 sterol desaturase ERG5 further converts 5-dehydroepisterol into ergosta-5,7,22,24(28)-tetraen-3beta-ol by forming the C-22(23) double bond in the sterol side chain. Finally, ergosta-5,7,22,24(28)-tetraen-3beta-ol is substrate of the C-24(28) sterol reductase ERG4 to produce ergosterol. This is Ergosterol biosynthetic protein 28 from Candida albicans (strain SC5314 / ATCC MYA-2876) (Yeast).